A 595-amino-acid chain; its full sequence is MESDGKSDRTKVPTAASSLNEKKADLNDQPGHSTDTEGNGSDNNNTQVGEKHHVSADDGPVDTAPVELAATQHQHPVEAEQNYPSGLKLTIILLALELAVLCVALDNTIVATAIPEITNQFHALTDVGWYGSAYLLTLCAFQLFFGRLYQLFSIKWVFLSCLFIFEIGSLICGVAPNSTALIVGRAVAGLGAAGIFSGALIIIAFSTPLEKRAIFTALISAIFGISSVIGPLLGGVFTDRVTWRWCFYINLPIGGVTAVALVFFLNIPPREAQPDTNETLRQKIMHFDPIGTAIFLPCIVCILLALQWGGTTYAWSDGRVVALLVLFGVLLITFVGLQFWMGEDATVPVRIVRQRSVGSAAVFTGLVGASFFIMVYYLPIWFQAIRGATATQSGINTLPMMISTTVGNIVGGVFVSFTGYYTPMMYALPPMASVGVGLMTTWTVDVSTGKWIGYQILFGLGLGLGMQQGIVTAQASLPVADTAIGTSLQVFAQMFGGSLFVSVAQNLFSNEVIKGLAAVDELGMTPQAVFNAGATELDNLFGSNPSLLAEVKVVYNDAVIWTFRTALITTCLSVLAVIFVKSGSVKGKKIEMVAA.

Positions 1–11 (MESDGKSDRTK) are enriched in basic and acidic residues. Residues 1–62 (MESDGKSDRT…HVSADDGPVD (62 aa)) form a disordered region. Residues 30 to 48 (PGHSTDTEGNGSDNNNTQV) are compositionally biased toward polar residues. 2 N-linked (GlcNAc...) asparagine glycosylation sites follow: N39 and N44. 3 consecutive transmembrane segments (helical) span residues 91–111 (IILLALELAVLCVALDNTIVA), 126–146 (DVGWYGSAYLLTLCAFQLFFG), and 156–176 (WVFLSCLFIFEIGSLICGVAP). A glycan (N-linked (GlcNAc...) asparagine) is linked at N177. Transmembrane regions (helical) follow at residues 186 to 206 (AVAGLGAAGIFSGALIIIAFS), 217 to 237 (ALISAIFGISSVIGPLLGGVF), and 245 to 265 (WCFYINLPIGGVTAVALVFFL). Residue N277 is glycosylated (N-linked (GlcNAc...) asparagine). Helical transmembrane passes span 290-310 (IGTAIFLPCIVCILLALQWGG), 320-340 (VVALLVLFGVLLITFVGLQFW), 362-382 (VFTGLVGASFFIMVYYLPIWF), 409-429 (IVGGVFVSFTGYYTPMMYALP), 451-471 (WIGYQILFGLGLGLGMQQGIV), 483-503 (AIGTSLQVFAQMFGGSLFVSV), and 559-579 (VIWTFRTALITTCLSVLAVIF).

It belongs to the major facilitator superfamily. TCR/Tet family.

It localises to the cell membrane. Functionally, MFS-type transporter; part of the gene cluster that mediates the biosynthesis of the phomopsins, a group of hexapeptide mycotoxins which infects lupins and causes lupinosis disease in livestock. PhomT is likely to be involved in the cellular export of phomopsins. The chain is MFS-type transporter phomT from Diaporthe leptostromiformis (Lupinosis disease fungus).